The chain runs to 525 residues: Bestrophin homolog 15 (525 aa).

The next 4 helical transmembrane spans lie at 36 to 56, 71 to 91, 237 to 257, and 273 to 293; these read LFMF…NLII, FDQN…VTII, LAYP…ALIA, and ILYP…VVGW.

This sequence belongs to the anion channel-forming bestrophin (TC 1.A.46) family. Calcium-sensitive chloride channel subfamily. In terms of assembly, forms oligomers.

It localises to the cell membrane. Functionally, forms chloride channels. The protein is Bestrophin homolog 15 (best-15) of Caenorhabditis elegans.